The sequence spans 232 residues: Cobalt transport protein CbiM (232 aa).

Helical transmembrane passes span 6–26 (GFLP…FVVH), 43–63 (LLLG…LPSV), 84–104 (IMAV…AHGG), 107–127 (TLGA…YGVY), 135–155 (VPLM…TYCV), and 181–201 (IFAV…VIVM).

Belongs to the CbiM family. Forms an energy-coupling factor (ECF) transporter complex composed of an ATP-binding protein (A component, CbiO), a transmembrane protein (T component, CbiQ) and 2 possible substrate-capture proteins (S components, CbiM and CbiN) of unknown stoichimetry.

It is found in the cell membrane. It participates in cofactor biosynthesis; adenosylcobalamin biosynthesis. Its function is as follows. Part of the energy-coupling factor (ECF) transporter complex CbiMNOQ involved in cobalt import. This Streptomyces coelicolor (strain ATCC BAA-471 / A3(2) / M145) protein is Cobalt transport protein CbiM.